We begin with the raw amino-acid sequence, 1401 residues long: MAP kinase kinase kinase wis4 (1401 aa).

2 disordered regions span residues 67 to 99 (HIPL…MSYT) and 176 to 205 (QDSI…NDFS). Polar residues-rich tracts occupy residues 72 to 99 (PSHS…MSYT) and 176 to 191 (QDSI…NQSL). Positions 1037 to 1306 (WQQGHFVRSG…AVDLLTHPWI (270 aa)) constitute a Protein kinase domain. ATP contacts are provided by residues 1043-1051 (VRSGMFGDV) and lysine 1066. The active-site Proton acceptor is aspartate 1161.

Belongs to the protein kinase superfamily. STE Ser/Thr protein kinase family. MAP kinase kinase kinase subfamily.

The catalysed reaction is L-seryl-[protein] + ATP = O-phospho-L-seryl-[protein] + ADP + H(+). The enzyme catalyses L-threonyl-[protein] + ATP = O-phospho-L-threonyl-[protein] + ADP + H(+). Functionally, involved in a signal transduction pathway that is activated in under conditions of heat shock, oxidative stress or limited nutrition. Unlike win1, it is not activated by changes in the osmolarity of the extracellular environment. Activates the wis1 MAP kinase kinase by phosphorylation. This is MAP kinase kinase kinase wis4 (wis4) from Schizosaccharomyces pombe (strain 972 / ATCC 24843) (Fission yeast).